The primary structure comprises 265 residues: MFLVDSHCHLDGLDYESLHKDVDDVLAKAAARDVKFCLAVATTLPGYLHMRDLVGERDNVVFSCGVHPLNQNDPYDVEDLRRLAAEEGVVALGETGLDYYYTPETKVRQQESFIHHIQIGRELNKPVIVHTRDARADTLAILREEKVTDCGGVLHCFTEDRETAGKLLDLGFYISFSGIVTFRNAEQLRDAARYVPLDRLLVETDSPYLAPVPHRGKENQPAMVRDVAEYMAVLKGVAVEELAQVTTDNFARLFHIDASRLQSIR.

Residues histidine 7, histidine 9, glutamate 94, histidine 130, histidine 155, and aspartate 205 each coordinate a divalent metal cation.

It belongs to the metallo-dependent hydrolases superfamily. TatD-type hydrolase family. It depends on a divalent metal cation as a cofactor.

This is an uncharacterized protein from Escherichia coli O157:H7.